The chain runs to 591 residues: MMRSHYCGQLNESLEGQEVTLCGWVHRRRDHGGVIFLDIRDREGLAQVVFDPDRAETFAAADRVRSEYVVKITGKVRLRPAGAGNANMASGMIEVLGYELEVLNEAETPPFPLNEYSDVGEETRLRYRFIDLRRPEMAEKLRLRSRMTTSIRRYLDENGFLDVETPILTRATPEGARDYLVPSRTHAGSFFALPQSPQLFKQLLMVAGFDRYYQIAKCFRDEDLRADRQPEFTQIDIETSFLDEKDIMGLTEGMIRNLFKEVLGLEFGEFPHMTFEEAMRRYGSDKPDLRNPLELVDVADQLKEVEFKVFSGPANDPKCRIAALRVPGGASMPRKQIDDYTKFVGIYGAKGLAYIKVNERAKGVEGLQSPIVKNIPEANLNVILDRVGAVDGDIVFFGADKAKIVSEALGALRIKLGHDLNLLTCEWAPMWVVDFPMFEENDDGSFTALHHPFTAPKCSPEELEANPATALSRAYDMVLNGTELGGGSIRIHRKEMQQAVFRLLGISEAEQEEKFGFLLDALKYGAPPHGGLAFGLDRLVMLMTGAQSIREVIAFPKTQSAACVMTQAPGLVDAKALRELHIRLREQPKAE.

E174 contacts L-aspartate. The tract at residues 198–201 (QLFK) is aspartate. L-aspartate is bound at residue R220. ATP is bound by residues 220–222 (RDE) and Q229. H450 serves as a coordination point for L-aspartate. E483 contacts ATP. L-aspartate is bound at residue R490. 535 to 538 (GLDR) is an ATP binding site.

Belongs to the class-II aminoacyl-tRNA synthetase family. Type 1 subfamily. In terms of assembly, homodimer.

It localises to the cytoplasm. It carries out the reaction tRNA(Asx) + L-aspartate + ATP = L-aspartyl-tRNA(Asx) + AMP + diphosphate. Its function is as follows. Aspartyl-tRNA synthetase with relaxed tRNA specificity since it is able to aspartylate not only its cognate tRNA(Asp) but also tRNA(Asn). Reaction proceeds in two steps: L-aspartate is first activated by ATP to form Asp-AMP and then transferred to the acceptor end of tRNA(Asp/Asn). In Pseudomonas fluorescens (strain ATCC BAA-477 / NRRL B-23932 / Pf-5), this protein is Aspartate--tRNA(Asp/Asn) ligase.